Here is a 283-residue protein sequence, read N- to C-terminus: ATP synthase gamma chain (283 aa).

The protein belongs to the ATPase gamma chain family. In terms of assembly, F-type ATPases have 2 components, CF(1) - the catalytic core - and CF(0) - the membrane proton channel. CF(1) has five subunits: alpha(3), beta(3), gamma(1), delta(1), epsilon(1). CF(0) has three main subunits: a, b and c.

It is found in the cell membrane. Produces ATP from ADP in the presence of a proton gradient across the membrane. The gamma chain is believed to be important in regulating ATPase activity and the flow of protons through the CF(0) complex. In Exiguobacterium sibiricum (strain DSM 17290 / CCUG 55495 / CIP 109462 / JCM 13490 / 255-15), this protein is ATP synthase gamma chain.